Consider the following 130-residue polypeptide: Holo-[acyl-carrier-protein] synthase (130 aa).

Mg(2+) is bound by residues D8 and E62.

It belongs to the P-Pant transferase superfamily. AcpS family. The cofactor is Mg(2+).

It is found in the cytoplasm. The catalysed reaction is apo-[ACP] + CoA = holo-[ACP] + adenosine 3',5'-bisphosphate + H(+). In terms of biological role, transfers the 4'-phosphopantetheine moiety from coenzyme A to a Ser of acyl-carrier-protein. The chain is Holo-[acyl-carrier-protein] synthase from Variovorax paradoxus (strain S110).